Reading from the N-terminus, the 259-residue chain is Methanethiol S-methyltransferase 2 (259 aa).

Helical transmembrane passes span 5–25 (LAIL…FLYA), 46–66 (LGEA…QHSV), 88–108 (TYVL…RPIP), 115–135 (SGIA…IAFA), and 182–202 (FLLA…FALA).

It belongs to the nurim family.

It localises to the membrane. It carries out the reaction methanethiol + S-adenosyl-L-methionine = dimethyl sulfide + S-adenosyl-L-homocysteine + H(+). Functionally, catalyzes the methylation of methanethiol (MeSH) to yield dimethylsulphide (DMS). The sequence is that of Methanethiol S-methyltransferase 2 from Bradyrhizobium diazoefficiens (strain JCM 10833 / BCRC 13528 / IAM 13628 / NBRC 14792 / USDA 110).